The chain runs to 89 residues: MSLSAEQKGEIVKKHARTASDTGSPEVQVALLTARIQHLSGHFAEHKQDHHSRQGLLKLVSQRRKLLDYLKRKDRQRYLDLIENLGLRK.

The interval 1 to 25 (MSLSAEQKGEIVKKHARTASDTGSP) is disordered.

Belongs to the universal ribosomal protein uS15 family. In terms of assembly, part of the 30S ribosomal subunit. Forms a bridge to the 50S subunit in the 70S ribosome, contacting the 23S rRNA.

Functionally, one of the primary rRNA binding proteins, it binds directly to 16S rRNA where it helps nucleate assembly of the platform of the 30S subunit by binding and bridging several RNA helices of the 16S rRNA. Its function is as follows. Forms an intersubunit bridge (bridge B4) with the 23S rRNA of the 50S subunit in the ribosome. The polypeptide is Small ribosomal subunit protein uS15 (Alkalilimnicola ehrlichii (strain ATCC BAA-1101 / DSM 17681 / MLHE-1)).